The primary structure comprises 130 residues: Small ribosomal subunit protein uS8 (130 aa).

Belongs to the universal ribosomal protein uS8 family. As to quaternary structure, part of the 30S ribosomal subunit. Contacts proteins S5 and S12.

In terms of biological role, one of the primary rRNA binding proteins, it binds directly to 16S rRNA central domain where it helps coordinate assembly of the platform of the 30S subunit. The polypeptide is Small ribosomal subunit protein uS8 (Opitutus terrae (strain DSM 11246 / JCM 15787 / PB90-1)).